Reading from the N-terminus, the 497-residue chain is Aspartyl/glutamyl-tRNA(Asn/Gln) amidotransferase subunit B (497 aa).

The protein belongs to the GatB/GatE family. GatB subfamily. In terms of assembly, heterotrimer of A, B and C subunits.

It catalyses the reaction L-glutamyl-tRNA(Gln) + L-glutamine + ATP + H2O = L-glutaminyl-tRNA(Gln) + L-glutamate + ADP + phosphate + H(+). The catalysed reaction is L-aspartyl-tRNA(Asn) + L-glutamine + ATP + H2O = L-asparaginyl-tRNA(Asn) + L-glutamate + ADP + phosphate + 2 H(+). In terms of biological role, allows the formation of correctly charged Asn-tRNA(Asn) or Gln-tRNA(Gln) through the transamidation of misacylated Asp-tRNA(Asn) or Glu-tRNA(Gln) in organisms which lack either or both of asparaginyl-tRNA or glutaminyl-tRNA synthetases. The reaction takes place in the presence of glutamine and ATP through an activated phospho-Asp-tRNA(Asn) or phospho-Glu-tRNA(Gln). This Rhodopirellula baltica (strain DSM 10527 / NCIMB 13988 / SH1) protein is Aspartyl/glutamyl-tRNA(Asn/Gln) amidotransferase subunit B.